The following is a 311-amino-acid chain: Formimidoylglutamase (311 aa).

Positions 127, 152, 154, 156, 236, and 238 each coordinate Mn(2+).

This sequence belongs to the arginase family. Requires Mn(2+) as cofactor.

The catalysed reaction is N-formimidoyl-L-glutamate + H2O = formamide + L-glutamate. It participates in amino-acid degradation; L-histidine degradation into L-glutamate; L-glutamate from N-formimidoyl-L-glutamate (hydrolase route): step 1/1. In terms of biological role, catalyzes the conversion of N-formimidoyl-L-glutamate to L-glutamate and formamide. The protein is Formimidoylglutamase of Macrococcus caseolyticus (strain JCSC5402) (Macrococcoides caseolyticum).